The sequence spans 820 residues: Chitinase A (820 aa).

A signal peptide spans 1-21 (MKLNKITSYIGFALLSGGALA). Positions 158-588 (RVTGAYFVEW…NAMYDGLTAG (431 aa)) constitute a GH18 domain. Residue Glu-313 is the Proton donor of the active site.

It belongs to the glycosyl hydrolase 18 family. Chitinase class II subfamily.

The catalysed reaction is Random endo-hydrolysis of N-acetyl-beta-D-glucosaminide (1-&gt;4)-beta-linkages in chitin and chitodextrins.. Its activity is regulated as follows. Stimulated by magnesium ions; inhibited by N-bromosuccinimide and 2-hydroxy-5-nitrobenzyl bromide. The polypeptide is Chitinase A (chiA) (Pseudoalteromonas piscicida).